A 191-amino-acid chain; its full sequence is FMN reductase (NADH) RutF (191 aa).

Belongs to the non-flavoprotein flavin reductase family. RutF subfamily.

The catalysed reaction is FMNH2 + NAD(+) = FMN + NADH + 2 H(+). Its function is as follows. Catalyzes the reduction of FMN to FMNH2 which is used to reduce pyrimidine by RutA via the Rut pathway. The polypeptide is FMN reductase (NADH) RutF (Escherichia coli O1:K1 / APEC).